The chain runs to 89 residues: Small ribosomal subunit protein uS17 (89 aa).

It belongs to the universal ribosomal protein uS17 family. In terms of assembly, part of the 30S ribosomal subunit.

Functionally, one of the primary rRNA binding proteins, it binds specifically to the 5'-end of 16S ribosomal RNA. This is Small ribosomal subunit protein uS17 from Xanthomonas campestris pv. campestris (strain B100).